The primary structure comprises 147 residues: Large ribosomal subunit protein bL9 (147 aa).

It belongs to the bacterial ribosomal protein bL9 family.

Functionally, binds to the 23S rRNA. In Natranaerobius thermophilus (strain ATCC BAA-1301 / DSM 18059 / JW/NM-WN-LF), this protein is Large ribosomal subunit protein bL9.